Here is a 448-residue protein sequence, read N- to C-terminus: T-box transcription factor TBX19 (448 aa).

The segment at residues 45–218 is a DNA-binding region (T-box); that stretch reads LEDAPLWQRF…YNPFAKAFLD (174 aa).

It localises to the nucleus. Its function is as follows. Transcriptional regulator involved in developmental processes. Can activate POMC gene expression and repress the alpha glycoprotein subunit and thyroid-stimulating hormone beta promoters. The chain is T-box transcription factor TBX19 from Homo sapiens (Human).